The primary structure comprises 130 residues: Histone H2A type 2-A (130 aa).

The disordered stretch occupies residues 1 to 22 (MSGRGKQGGKARAKAKSRSSRA). Ser2 is subject to N-acetylserine. Ser2 carries the post-translational modification Phosphoserine; by RPS6KA5. The residue at position 4 (Arg4) is a Citrulline; alternate. Residue Arg4 is modified to Symmetric dimethylarginine; by PRMT5; alternate. N6-(2-hydroxyisobutyryl)lysine; alternate is present on residues Lys6 and Lys10. Lys6 is subject to N6-(beta-hydroxybutyryl)lysine; alternate. Lys6 carries the post-translational modification N6-acetyllysine; alternate. Over residues 7–19 (QGGKARAKAKSRS) the composition is skewed to basic residues. Lys10 carries the N6-lactoyllysine; alternate modification. Lys10 is subject to N6-succinyllysine; alternate. Residues Lys14 and Lys16 each participate in a glycyl lysine isopeptide (Lys-Gly) (interchain with G-Cter in ubiquitin) cross-link. Residue Lys37 is modified to N6-(2-hydroxyisobutyryl)lysine; alternate. Lys37 carries the post-translational modification N6-(beta-hydroxybutyryl)lysine; alternate. N6-crotonyllysine; alternate is present on Lys37. 2 positions are modified to N6-(2-hydroxyisobutyryl)lysine: Lys75 and Lys76. Lys96 carries the post-translational modification N6-(2-hydroxyisobutyryl)lysine; alternate. At Lys96 the chain carries N6-succinyllysine; alternate. Lys96 is modified (N6-glutaryllysine; alternate). Position 100 is an N6-glutaryllysine (Lys100). Gln105 bears the N5-methylglutamine mark. Position 119 is an N6-(2-hydroxyisobutyryl)lysine; alternate (Lys119). 2 positions are modified to N6-crotonyllysine; alternate: Lys119 and Lys120. Residues Lys119 and Lys120 each carry the N6-glutaryllysine; alternate modification. Lys120 is subject to N6-(beta-hydroxybutyryl)lysine; alternate. Residue Lys120 forms a Glycyl lysine isopeptide (Lys-Gly) (interchain with G-Cter in ubiquitin); alternate linkage. Position 121 is a phosphothreonine; by DCAF1 (Thr121). Lys126 is subject to N6-(beta-hydroxybutyryl)lysine; alternate. Position 126 is an N6-crotonyllysine; alternate (Lys126). The residue at position 126 (Lys126) is an N6-glutaryllysine; alternate.

It belongs to the histone H2A family. In terms of assembly, the nucleosome is a histone octamer containing two molecules each of H2A, H2B, H3 and H4 assembled in one H3-H4 heterotetramer and two H2A-H2B heterodimers. The octamer wraps approximately 147 bp of DNA. Deiminated on Arg-4 in granulocytes upon calcium entry. In terms of processing, monoubiquitination of Lys-120 (H2AK119Ub) by RING1, TRIM37 and RNF2/RING2 complex gives a specific tag for epigenetic transcriptional repression and participates in X chromosome inactivation of female mammals. It is involved in the initiation of both imprinted and random X inactivation. Ubiquitinated H2A is enriched in inactive X chromosome chromatin. Ubiquitination of H2A functions downstream of methylation of 'Lys-27' of histone H3 (H3K27me). H2AK119Ub by RNF2/RING2 can also be induced by ultraviolet and may be involved in DNA repair. Following DNA double-strand breaks (DSBs), it is ubiquitinated through 'Lys-63' linkage of ubiquitin moieties by the E2 ligase UBE2N and the E3 ligases RNF8 and RNF168, leading to the recruitment of repair proteins to sites of DNA damage. Ubiquitination at Lys-14 and Lys-16 (H2AK13Ub and H2AK15Ub, respectively) in response to DNA damage is initiated by RNF168 that mediates monoubiquitination at these 2 sites, and 'Lys-63'-linked ubiquitin are then conjugated to monoubiquitin; RNF8 is able to extend 'Lys-63'-linked ubiquitin chains in vitro. H2AK119Ub and ionizing radiation-induced 'Lys-63'-linked ubiquitination (H2AK13Ub and H2AK15Ub) are distinct events. Post-translationally, phosphorylation on Ser-2 (H2AS1ph) is enhanced during mitosis. Phosphorylation on Ser-2 by RPS6KA5/MSK1 directly represses transcription. Acetylation of H3 inhibits Ser-2 phosphorylation by RPS6KA5/MSK1. Phosphorylation at Thr-121 (H2AT120ph) by DCAF1 is present in the regulatory region of many tumor suppresor genes and down-regulates their transcription. Symmetric dimethylation on Arg-4 by the PRDM1/PRMT5 complex may play a crucial role in the germ-cell lineage. In terms of processing, glutamine methylation at Gln-105 (H2AQ104me) by FBL is specifically dedicated to polymerase I. It is present at 35S ribosomal DNA locus and impairs binding of the FACT complex. Post-translationally, crotonylation (Kcr) is specifically present in male germ cells and marks testis-specific genes in post-meiotic cells, including X-linked genes that escape sex chromosome inactivation in haploid cells. Crotonylation marks active promoters and enhancers and confers resistance to transcriptional repressors. It is also associated with post-meiotically activated genes on autosomes. Hydroxybutyrylation of histones is induced by starvation. In terms of processing, lactylated in macrophages by EP300/P300 by using lactoyl-CoA directly derived from endogenous or exogenous lactate, leading to stimulates gene transcription.

Its subcellular location is the nucleus. It localises to the chromosome. Core component of nucleosome. Nucleosomes wrap and compact DNA into chromatin, limiting DNA accessibility to the cellular machineries which require DNA as a template. Histones thereby play a central role in transcription regulation, DNA repair, DNA replication and chromosomal stability. DNA accessibility is regulated via a complex set of post-translational modifications of histones, also called histone code, and nucleosome remodeling. The sequence is that of Histone H2A type 2-A (Hist2h2aa1) from Mus musculus (Mouse).